The following is a 610-amino-acid chain: MNSQDLKKRQEKIRNFSIIAHIDHGKSTLADRILEKTETVSSREMQAQLLDSMDLERERGITIKLNAIELNYTAKDGETYIFHLIDTPGHVDFTYEVSRSLAACEGAILVVDAAQGIEAQTLANVYLALDNDLEILPVINKIDLPAADPERVRHEVEDVIGLDASEAVLASAKAGIGIEEILEQIVEKVPAPTGDVDAPFQALIFDSVYDAYRGVILQVRIVNGIVKPGDKIQMMSNGKTFDVTEVGIFTPKAVGRDFLATGDVGYVAASIKTVADTRVGDTVTLANNPAKEALHGYKQMNPMVFAGIYPIESNKYNDLREALEKLQLNDASLQFEPETSQALGFGFRCGFLGLLHMDVIQERLEREFNIDLIMTAPSVVYHVHTTDEDMIEVSNPSEFPDPTRVAFIEEPYVKAQIMVPQEFVGAVMELSQRRRGDFVTMDYIDDNRVNVIYQIPLAEIVFDFFDKLKSSTRGYASFDYDMSEYRRSQLVKMDILLNGDKVDALSFIVHKEFAYERGKIIVEKLKKIIPRQQFEVPIQAAIGQKIVARSDIKALRKNVLAKCYGGDVSRKRKLLEKQKAGKKRMKAIGSVEVPQEAFLSVLSMDDDTKK.

A tr-type G domain is found at 11-193 (EKIRNFSIIA…QIVEKVPAPT (183 aa)). GTP is bound by residues 23 to 28 (DHGKST) and 140 to 143 (NKID).

The protein belongs to the TRAFAC class translation factor GTPase superfamily. Classic translation factor GTPase family. LepA subfamily.

It is found in the cell membrane. The enzyme catalyses GTP + H2O = GDP + phosphate + H(+). Its function is as follows. Required for accurate and efficient protein synthesis under certain stress conditions. May act as a fidelity factor of the translation reaction, by catalyzing a one-codon backward translocation of tRNAs on improperly translocated ribosomes. Back-translocation proceeds from a post-translocation (POST) complex to a pre-translocation (PRE) complex, thus giving elongation factor G a second chance to translocate the tRNAs correctly. Binds to ribosomes in a GTP-dependent manner. This Streptococcus pyogenes serotype M49 (strain NZ131) protein is Elongation factor 4.